We begin with the raw amino-acid sequence, 879 residues long: Alanine--tRNA ligase (879 aa).

Positions 566, 570, 668, and 672 each coordinate Zn(2+).

Belongs to the class-II aminoacyl-tRNA synthetase family. The cofactor is Zn(2+).

Its subcellular location is the cytoplasm. The enzyme catalyses tRNA(Ala) + L-alanine + ATP = L-alanyl-tRNA(Ala) + AMP + diphosphate. Functionally, catalyzes the attachment of alanine to tRNA(Ala) in a two-step reaction: alanine is first activated by ATP to form Ala-AMP and then transferred to the acceptor end of tRNA(Ala). Also edits incorrectly charged Ser-tRNA(Ala) and Gly-tRNA(Ala) via its editing domain. This Listeria monocytogenes serotype 4b (strain F2365) protein is Alanine--tRNA ligase.